A 329-amino-acid polypeptide reads, in one-letter code: U5 small nuclear ribonucleoprotein TSSC4 (329 aa).

Disordered regions lie at residues 1–88 (MAEA…MSST) and 104–156 (ARRA…PDYV). Residues 22–41 (DTLPSDTVSLSDSDSDLSLP) are compositionally biased toward low complexity. Phosphoserine is present on residues Ser-60, Ser-67, Ser-86, Ser-132, Ser-143, and Ser-146. Residues 77-104 (VQPFHLRGMSSTFSQRSRDIFDCLEGAA) are hom2; mediates interaction with the U5 snRNP complexes and required for spliceosomal tri-snRNP complex assembly. The segment at 149–316 (VPPVPDYVAH…SRKRSRDHFR (168 aa)) is interaction with SNRNP200. Residues 150–186 (PPVPDYVAHPERWTKYSLEDVTEVSEQSNQATALAFL) form a hom3; mediates interaction with the U5 snRNP complexes region. The interval 201 to 250 (FNQDPSSCGEGRVIFTKPVRGVEARHERKRVLGKVGEPGRGGLGNPATDR) is hom4; necessary for interaction with the PRPF19 complex and required for spliceosomal tri-snRNP complex assembly. An N6-acetyllysine modification is found at Lys-217. Positions 221–329 (GVEARHERKR…SSPEDPGAEV (109 aa)) are disordered. Phosphoserine is present on Ser-265. The segment covering 306-317 (GSRKRSRDHFRN) has biased composition (basic residues). Ser-321 is modified (phosphoserine).

It belongs to the TSSC4 family. In terms of assembly, interacts in a RNA-independent manner with distinct U5 snRNP-containing complexes, the mono-U5 snRNP and the post-splicing U5 snRNP-PRPF19 complex. Interacts with SNRNP200; the interaction is direct, excludes recruitment of C9ORF78 and WBP4 to SNRNP200 and negatively regulates its RNA helicase activity. Interacts with PRPF8; the interaction is direct. Expressed in fetal brain, lung, liver and kidney. Widely expressed in adult tissues.

Its subcellular location is the nucleus. It is found in the cytoplasm. Protein associated with the U5 snRNP, during its maturation and its post-splicing recycling and which is required for spliceosomal tri-snRNP complex assembly in the nucleus. Has a molecular sequestering activity and transiently hinders SNRNP200 binding sites for constitutive splicing factors that intervene later during the assembly of the spliceosome and splicing. Together with its molecular sequestering activity, may also function as a molecular adapter and placeholder, coordinating the assembly of the U5 snRNP and its association with the U4/U6 di-snRNP. The chain is U5 small nuclear ribonucleoprotein TSSC4 from Homo sapiens (Human).